The chain runs to 431 residues: UDP-N-acetylmuramoylalanine--D-glutamate ligase (431 aa).

111-117 is a binding site for ATP; the sequence is GTDGKST.

Belongs to the MurCDEF family.

The protein localises to the cytoplasm. It catalyses the reaction UDP-N-acetyl-alpha-D-muramoyl-L-alanine + D-glutamate + ATP = UDP-N-acetyl-alpha-D-muramoyl-L-alanyl-D-glutamate + ADP + phosphate + H(+). The protein operates within cell wall biogenesis; peptidoglycan biosynthesis. Cell wall formation. Catalyzes the addition of glutamate to the nucleotide precursor UDP-N-acetylmuramoyl-L-alanine (UMA). The chain is UDP-N-acetylmuramoylalanine--D-glutamate ligase from Petrotoga mobilis (strain DSM 10674 / SJ95).